Consider the following 612-residue polypeptide: Cytoplasmic dynein 1 intermediate chain 2 (612 aa).

Composition is skewed to basic and acidic residues over residues M1–R13 and Q20–A43. The segment at M1 to Q188 is disordered. S2 is subject to N-acetylserine. S51 carries the post-translational modification Diphosphoserine. S51 and S84 each carry phosphoserine. Positions P82–S91 are enriched in low complexity. T89 bears the Phosphothreonine mark. Residues S91, S95, and S98 each carry the phosphoserine modification. The span at E164–Q188 shows a compositional bias: basic and acidic residues. WD repeat units follow at residues S251–E300, H304–V344, A353–D394, S403–S443, G448–S493, D496–T536, and E542–R581.

Belongs to the dynein intermediate chain family. Homodimer. The cytoplasmic dynein 1 complex consists of two catalytic heavy chains (HCs) and a number of non-catalytic subunits presented by intermediate chains (ICs), light intermediate chains (LICs) and light chains (LCs); the composition seems to vary in respect to the IC, LIC and LC composition. The heavy chain homodimer serves as a scaffold for the probable homodimeric assembly of the respective non-catalytic subunits. The ICs and LICs bind directly to the HC dimer and the LCs assemble on the IC dimer. Interacts with DYNLT3. Interacts with DYNLT1. Interacts (dephosphorylated at Ser-84) with DCTN1. Interacts with BICD2. Interacts with SPEF2. Interacts with CFAP61. In terms of processing, the phosphorylation status of Ser-84 appears to be involved in dynactin-dependent target binding. Post-translationally, pyrophosphorylation by 5-diphosphoinositol pentakisphosphate (5-IP7) promotes interaction with DCTN1. Serine pyrophosphorylation is achieved by Mg(2+)-dependent, but enzyme independent transfer of a beta-phosphate from a inositol pyrophosphate to a pre-phosphorylated serine residue.

It localises to the cytoplasm. The protein localises to the cytoskeleton. Acts as one of several non-catalytic accessory components of the cytoplasmic dynein 1 complex that are thought to be involved in linking dynein to cargos and to adapter proteins that regulate dynein function. Cytoplasmic dynein 1 acts as a motor for the intracellular retrograde motility of vesicles and organelles along microtubules. The intermediate chains mediate the binding of dynein to dynactin via its 150 kDa component (p150-glued) DCTN1. Involved in membrane-transport, such as Golgi apparatus, late endosomes and lysosomes. The polypeptide is Cytoplasmic dynein 1 intermediate chain 2 (Dync1i2) (Mus musculus (Mouse)).